Here is a 234-residue protein sequence, read N- to C-terminus: MLFSPPLQRATLIQRYKRFLADVITPDGTTLTLHCPNTGAMTGCATPGDTVWYSTSENTKRKYPHTWELTETQFGAFICVNTLRANQLTKEAIQENRLPALAGYNILKSEVKYGAERSRIDFMLQADFRPDCYIEVKSVTLAEKENGYFPDAITERGQKHLRELMGVAAAGHRAVVVFAVLHSAITRFSPARHIDIKYAQLLSEAQNKGVEVLAYKAELSAQKMELNEPVPITL.

The segment at residues 201–220 is a DNA-binding region (H-T-H motif); the sequence is LLSEAQNKGVEVLAYKAELS.

The protein belongs to the SfsA family.

Binds to DNA non-specifically. Could be a regulatory factor involved in maltose metabolism. This chain is Sugar fermentation stimulation protein A, found in Salmonella choleraesuis (strain SC-B67).